Reading from the N-terminus, the 362-residue chain is Alternative oxidase, mitochondrial (362 aa).

Residues 1-64 (MNTPKVNILY…RGFTTTSVVR (64 aa)) constitute a mitochondrion transit peptide. The helical transmembrane segment at 156–176 (LVRFIFLESIAGVPGMVAGML) threads the bilayer. Fe cation contacts are provided by glutamate 163, glutamate 202, and histidine 205. A helical transmembrane segment spans residues 222 to 242 (LILGAQGVFFNAMFLSYLVSP). Positions 253, 310, and 313 each coordinate Fe cation.

The protein belongs to the alternative oxidase family. It depends on Fe cation as a cofactor.

Its subcellular location is the mitochondrion inner membrane. Catalyzes cyanide-resistant oxygen consumption. May increase respiration when the cytochrome respiratory pathway is restricted, or in response to low temperatures. The protein is Alternative oxidase, mitochondrial (aod-1) of Gelasinospora sp. (strain S23).